The following is a 308-amino-acid chain: Putative gluconeogenesis factor (308 aa).

This sequence belongs to the gluconeogenesis factor family.

The protein localises to the cytoplasm. Its function is as follows. Required for morphogenesis under gluconeogenic growth conditions. The sequence is that of Putative gluconeogenesis factor from Pasteurella multocida (strain Pm70).